The primary structure comprises 473 residues: Homeobox protein ATH1 (473 aa).

Positions 205-221 (SKYLHSVQEILSHFAAY) are SR/KY domain. The segment at 266 to 336 (QRRALEAKKT…NLRERICKKI (71 aa)) is BELL domain. A DNA-binding region (homeobox) is located at residues 372-434 (IWRPQRGLPE…NARVRLWKPM (63 aa)). Positions 448 to 473 (NNSHIQPNGPTLRMPKSVMMSQAMHK) are disordered.

Belongs to the TALE/BELL homeobox family. As to quaternary structure, may form heterodimeric complex with the TALE/KNOX protein STM. In terms of tissue distribution, most abundant in flowers.

The protein localises to the nucleus. Transcription factor which may be involved in the signal transduction pathway downstream of the COP1 gene. Controls floral competency as a specific activator of FLC expression. Is responsive of the nuclear import of SHOOT MERISTEMLESS (STM). The polypeptide is Homeobox protein ATH1 (ATH1) (Arabidopsis thaliana (Mouse-ear cress)).